A 269-amino-acid polypeptide reads, in one-letter code: Polyamine aminopropyltransferase (269 aa).

Residues Met1 to Glu226 form the PABS domain. S-methyl-5'-thioadenosine is bound at residue Gln28. Residues His59 and Asp83 each contribute to the spermidine site. S-methyl-5'-thioadenosine contacts are provided by residues Asp102 and Asp133–Gly134. The active-site Proton acceptor is Asp150. Asp150–Asp153 is a spermidine binding site.

The protein belongs to the spermidine/spermine synthase family. As to quaternary structure, homodimer or homotetramer.

Its subcellular location is the cytoplasm. The enzyme catalyses S-adenosyl 3-(methylsulfanyl)propylamine + putrescine = S-methyl-5'-thioadenosine + spermidine + H(+). The protein operates within amine and polyamine biosynthesis; spermidine biosynthesis; spermidine from putrescine: step 1/1. Functionally, catalyzes the irreversible transfer of a propylamine group from the amino donor S-adenosylmethioninamine (decarboxy-AdoMet) to putrescine (1,4-diaminobutane) to yield spermidine. This chain is Polyamine aminopropyltransferase, found in Archaeoglobus fulgidus (strain ATCC 49558 / DSM 4304 / JCM 9628 / NBRC 100126 / VC-16).